Reading from the N-terminus, the 571-residue chain is Hemagglutinin-neuraminidase (571 aa).

The Intravirion segment spans residues 1–25 (MEDYSNLSLKSIPKRTCRIIFRTAT). Residues 26-46 (ILGICTLIVLCSSILHEIIHL) form a helical membrane-spanning segment. Residues 47–571 (DVSSGLMDSD…IIPFLRELIP (525 aa)) lie on the Virion surface side of the membrane. 3 cysteine pairs are disulfide-bonded: C166–C190, C180–C241, and C232–C245. Residues 228 to 233 (NRKSCS) are involved in neuraminidase activity. 3 N-linked (GlcNAc...) asparagine; by host glycosylation sites follow: N272, N284, and N335. 3 cysteine pairs are disulfide-bonded: C338-C459, C370-C380, and C453-C463. N386, N454, N498, N501, N517, and N522 each carry an N-linked (GlcNAc...) asparagine; by host glycan. An intrachain disulfide couples C535 to C546.

It belongs to the paramyxoviruses hemagglutinin-neuraminidase family. Homotetramer; composed of disulfide-linked homodimers. Interacts with F protein trimer.

Its subcellular location is the virion membrane. The protein localises to the host cell membrane. The catalysed reaction is Hydrolysis of alpha-(2-&gt;3)-, alpha-(2-&gt;6)-, alpha-(2-&gt;8)- glycosidic linkages of terminal sialic acid residues in oligosaccharides, glycoproteins, glycolipids, colominic acid and synthetic substrates.. In terms of biological role, attaches the virus to sialic acid-containing cell receptors and thereby initiating infection. Binding of HN protein to the receptor induces a conformational change that allows the F protein to trigger virion/cell membranes fusion. Neuraminidase activity ensures the efficient spread of the virus by dissociating the mature virions from the neuraminic acid containing glycoproteins. This Homo sapiens (Human) protein is Hemagglutinin-neuraminidase (HN).